A 561-amino-acid chain; its full sequence is MTDAGKKERVSILCVGSPSITTLLGWRLQQSSVVTCQETIMFFNAPEPSTNVFTIQSKKFGTRKYRPTYRLSKLEEVTSDSEPFDYVFVSIKPNSRNFQLSNILEPVITAKHTCIVYNSTGAIGVEEALQRQYPENPIFSLITHTPVSQRSVDEFFFGDCAPFYLAPAGSNLEIDQLSRLVEILEGGEISSEILDTLLPLEIEDLALPLSLYPLTVLTQNPNLPKLLERPDINDLHQGILQELDSLCNCLGSSLDVKKLSKQRETLLSHMQVNPAFREYRSNRPVEIVQYLHYCIDLATKQSLQVPRLRTISALISSIQHLPLVQPHHMNDMHGPTDNSPKKNKVLVNMRPINPSSFVSDRHSPLHPYSVPENGKPNMGRIPSAPSLSKGRAMTADNMDMLSLTTRRSRRSLYSPSLMQMQQSLKSDYEGLGRTFDPRFAPRGSPPVRGGKNVLSPEAKEHTHKNISPESSRFGTPSDPNSSSQSLGNEVLSRPNSNSNSAESRNGETDDSGESETYFTLMNNNKGVEPRASVASETSSMTVIPNAMRRFPLARGTSRMKS.

Disordered stretches follow at residues 369 to 390 and 429 to 515; these read SVPENGKPNMGRIPSAPSLSKG and EGLG…GESE. At serine 383 the chain carries Phosphoserine. The span at 465–503 shows a compositional bias: polar residues; it reads NISPESSRFGTPSDPNSSSQSLGNEVLSRPNSNSNSAES.

This is an uncharacterized protein from Schizosaccharomyces pombe (strain 972 / ATCC 24843) (Fission yeast).